The following is a 610-amino-acid chain: UvrABC system protein C (610 aa).

The GIY-YIG domain maps to 16-94 (SQPGVYRMYD…IKLYQPRYNV (79 aa)). The region spanning 204–239 (QQVLNQLISRMESASRDLRFEDAARIRDQIQAVRRV) is the UVR domain.

Belongs to the UvrC family. In terms of assembly, interacts with UvrB in an incision complex.

Its subcellular location is the cytoplasm. The UvrABC repair system catalyzes the recognition and processing of DNA lesions. UvrC both incises the 5' and 3' sides of the lesion. The N-terminal half is responsible for the 3' incision and the C-terminal half is responsible for the 5' incision. In Pectobacterium atrosepticum (strain SCRI 1043 / ATCC BAA-672) (Erwinia carotovora subsp. atroseptica), this protein is UvrABC system protein C.